Consider the following 373-residue polypeptide: Cytoplasmic tRNA 2-thiolation protein 1 (373 aa).

It belongs to the TtcA family. CTU1/NCS6/ATPBD3 subfamily.

It localises to the cytoplasm. Its pathway is tRNA modification; 5-methoxycarbonylmethyl-2-thiouridine-tRNA biosynthesis. Its function is as follows. Plays a central role in 2-thiolation of mcm(5)S(2)U at tRNA wobble positions of tRNA(Lys), tRNA(Glu) and tRNA(Gln). Directly binds tRNAs and probably acts by catalyzing adenylation of tRNAs, an intermediate required for 2-thiolation. It is unclear whether it acts as a sulfurtransferase that transfers sulfur from thiocarboxylated URM1 onto the uridine of tRNAs at wobble position. The polypeptide is Cytoplasmic tRNA 2-thiolation protein 1 (Caenorhabditis elegans).